Consider the following 303-residue polypeptide: Succinate--CoA ligase [ADP-forming] subunit alpha (303 aa).

CoA contacts are provided by residues 20-23, lysine 46, and 108-110; these read TGSE and ITE. Residue tyrosine 173 coordinates substrate. The Tele-phosphohistidine intermediate role is filled by histidine 259.

This sequence belongs to the succinate/malate CoA ligase alpha subunit family. In terms of assembly, heterotetramer of two alpha and two beta subunits.

The catalysed reaction is succinate + ATP + CoA = succinyl-CoA + ADP + phosphate. It carries out the reaction GTP + succinate + CoA = succinyl-CoA + GDP + phosphate. Its pathway is carbohydrate metabolism; tricarboxylic acid cycle; succinate from succinyl-CoA (ligase route): step 1/1. Succinyl-CoA synthetase functions in the citric acid cycle (TCA), coupling the hydrolysis of succinyl-CoA to the synthesis of either ATP or GTP and thus represents the only step of substrate-level phosphorylation in the TCA. The alpha subunit of the enzyme binds the substrates coenzyme A and phosphate, while succinate binding and nucleotide specificity is provided by the beta subunit. This is Succinate--CoA ligase [ADP-forming] subunit alpha from Mycobacterium bovis (strain ATCC BAA-935 / AF2122/97).